A 342-amino-acid polypeptide reads, in one-letter code: GTPase Obg (342 aa).

Positions Met1–Ile159 constitute an Obg domain. Residues Ala160–Asp327 form the OBG-type G domain. Residues Gly166 to Ser173, Phe191 to His195, Asp212 to Gly215, Ser279 to Asp282, and Ser308 to Ala310 contribute to the GTP site. Mg(2+) is bound by residues Ser173 and Thr193.

It belongs to the TRAFAC class OBG-HflX-like GTPase superfamily. OBG GTPase family. In terms of assembly, monomer. The cofactor is Mg(2+).

Its subcellular location is the cytoplasm. Functionally, an essential GTPase which binds GTP, GDP and possibly (p)ppGpp with moderate affinity, with high nucleotide exchange rates and a fairly low GTP hydrolysis rate. Plays a role in control of the cell cycle, stress response, ribosome biogenesis and in those bacteria that undergo differentiation, in morphogenesis control. This is GTPase Obg from Methylobacterium radiotolerans (strain ATCC 27329 / DSM 1819 / JCM 2831 / NBRC 15690 / NCIMB 10815 / 0-1).